Reading from the N-terminus, the 242-residue chain is Potassium/proton antiporter CemA (242 aa).

2 helical membrane passes run 116-136 and 200-220; these read IIFC…YSIL and ISGF…YLIF.

Belongs to the CemA family.

It localises to the plastid. It is found in the chloroplast inner membrane. The catalysed reaction is K(+)(in) + H(+)(out) = K(+)(out) + H(+)(in). Its function is as follows. Contributes to K(+)/H(+) antiport activity by supporting proton efflux to control proton extrusion and homeostasis in chloroplasts in a light-dependent manner to modulate photosynthesis. Prevents excessive induction of non-photochemical quenching (NPQ) under continuous-light conditions. Indirectly promotes efficient inorganic carbon uptake into chloroplasts. In Chloranthus spicatus (Chulantree), this protein is Potassium/proton antiporter CemA.